The sequence spans 65 residues: Large ribosomal subunit protein uL29 (65 aa).

This sequence belongs to the universal ribosomal protein uL29 family.

This chain is Large ribosomal subunit protein uL29, found in Parabacteroides distasonis (strain ATCC 8503 / DSM 20701 / CIP 104284 / JCM 5825 / NCTC 11152).